A 540-amino-acid chain; its full sequence is Phosphoenolpyruvate carboxykinase (ATP) (540 aa).

Substrate is bound at residue Arg65. An N6-acetyllysine modification is found at Lys87. Substrate contacts are provided by Tyr207 and Lys213. ATP contacts are provided by residues Lys213, His232, and 248–256 (GLSGTGKTT). Positions 213 and 232 each coordinate Mn(2+). Asp269 contacts Mn(2+). ATP contacts are provided by residues Glu297, Arg333, 449–450 (RI), and Thr455. A substrate-binding site is contributed by Arg333. N6-acetyllysine is present on Lys523.

It belongs to the phosphoenolpyruvate carboxykinase (ATP) family. Monomer. It depends on Mn(2+) as a cofactor.

Its subcellular location is the cytoplasm. The catalysed reaction is oxaloacetate + ATP = phosphoenolpyruvate + ADP + CO2. It functions in the pathway carbohydrate biosynthesis; gluconeogenesis. Involved in the gluconeogenesis. Catalyzes the conversion of oxaloacetate (OAA) to phosphoenolpyruvate (PEP) through direct phosphoryl transfer between the nucleoside triphosphate and OAA. This is Phosphoenolpyruvate carboxykinase (ATP) from Shigella dysenteriae serotype 1 (strain Sd197).